The primary structure comprises 122 residues: Large ribosomal subunit protein bL12 (122 aa).

The protein belongs to the bacterial ribosomal protein bL12 family. As to quaternary structure, homodimer. Part of the ribosomal stalk of the 50S ribosomal subunit. Forms a multimeric L10(L12)X complex, where L10 forms an elongated spine to which 2 to 4 L12 dimers bind in a sequential fashion. Binds GTP-bound translation factors.

Its function is as follows. Forms part of the ribosomal stalk which helps the ribosome interact with GTP-bound translation factors. Is thus essential for accurate translation. In Mycoplasma capricolum subsp. capricolum (strain California kid / ATCC 27343 / NCTC 10154), this protein is Large ribosomal subunit protein bL12.